The chain runs to 106 residues: Insulin-2 (106 aa).

A signal peptide spans 1-23 (MALWMQCLPLVLVLLFSTPNTEA). 3 cysteine pairs are disulfide-bonded: cysteine 30/cysteine 92, cysteine 42/cysteine 105, and cysteine 91/cysteine 96. Residues 56–83 (DIEQAQVNGPQDNELDGMQFQPQEYQKM) constitute a propeptide, c peptide.

Belongs to the insulin family. In terms of assembly, heterodimer of a B chain and an A chain linked by two disulfide bonds.

Its subcellular location is the secreted. Its function is as follows. Insulin decreases blood glucose concentration. It increases cell permeability to monosaccharides, amino acids and fatty acids. It accelerates glycolysis, the pentose phosphate cycle, and glycogen synthesis in liver. The polypeptide is Insulin-2 (ins-b) (Xenopus laevis (African clawed frog)).